The primary structure comprises 207 residues: Abscisic acid receptor PYL4 (207 aa).

The interval 45 to 195 (HEVGPNQCCS…NLQSLAKIAE (151 aa)) is START-like. A disulfide bond links Cys-52 and Cys-176. Abscisate is bound by residues Lys-81, 111–116 (AASSTE), 138–144 (RLSNYRS), and Glu-160. The Gate loop signature appears at 107–111 (SGLPA). Positions 137 to 139 (HRL) match the Latch loop motif.

Belongs to the PYR/PYL/RCAR abscisic acid intracellular receptor family. In terms of assembly, monomer. Homodimer. Binds ABA on one subunit only. Interacts with HAB1, ABI1 and ABI2, and possibly with other PP2Cs. Binds to CARs protein in an ABA-independent manner, both at the plasma membrane and in the nucleus. Interacts directly with CAR1 and CAR4. Interacts with TOPP1. Interacts with DDA1. Interacts with FREE1 (via N-terminus). Interacts with the E3 ubiquitin-protein ligase RSL1 at the plasma membrane. Ubiquitynated and degraded by the proteasome upon binding to the E3 ubiquitin-protein ligase RSL1 at the plasma membrane.

It is found in the cytoplasm. The protein resides in the nucleus. The protein localises to the cell membrane. It localises to the vacuole. Its function is as follows. Receptor for abscisic acid (ABA) required for ABA-mediated responses such as stomatal closure and germination inhibition. Inhibits the activity of group-A protein phosphatases type 2C (PP2Cs) when activated by ABA. Can be activated by both (-)-ABA and (+)-ABA. This chain is Abscisic acid receptor PYL4, found in Arabidopsis thaliana (Mouse-ear cress).